The primary structure comprises 953 residues: Trafficking kinesin-binding protein 1 (953 aa).

The HAP1 N-terminal domain maps to 47–354 (LEEQLPHYKL…EELKNLRNKT (308 aa)). Positions 104–356 (QMTKTYNDID…LKNLRNKTMP (253 aa)) form a coiled coil. An interaction with HGS region spans residues 359–509 (TSRRYHSLGL…RRLSLRRENY (151 aa)). Ser-447 carries O-linked (GlcNAc) serine glycosylation. Residues 472–495 (AADLGNDERSKKPGTPGTPGSHDL) form a disordered region. Residues 492 to 532 (SHDLETALRRLSLRRENYLSERRFFEEEQERKLQELAEKGE) adopt a coiled-coil conformation. Residue Ser-537 is modified to Phosphoserine. Residues 658-672 (PGKCMSQTNSTFTFT) are interaction with OGT. O-linked (GlcNAc) serine glycans are attached at residues Ser-680 and Ser-719. At Ser-719 the chain carries Phosphoserine. The interval 777–796 (VIPSTPPNSPMQTPTSSPPS) is disordered. A compositionally biased stretch (low complexity) spans 786-796 (PMQTPTSSPPS). Ser-919 carries the post-translational modification Phosphoserine. A glycan (O-linked (GlcNAc) threonine) is linked at Thr-935.

The protein belongs to the milton family. As to quaternary structure, interacts with RHOT1 and RHOT2. Found in a complex with KIF5B, OGT, RHOT1 and RHOT2. Interacts with HGS. Interacts with GABRA1. Interacts with KIF5C. Interacts with OGT; stable interaction is not required for glycosylation of this protein by OGT. Isoform 1 interacts with OGT. O-glycosylated. Glycosylated by OGT; glycosylation in response to increased extracellular glucose levels is required for and leads to regulation of mitochondrial motility by OGT. High expression in spinal cord and moderate expression in all other tissues and specific brain regions examined. Expressed in all cell lines examined.

The protein localises to the cytoplasm. It is found in the nucleus. It localises to the mitochondrion. The protein resides in the early endosome. Its subcellular location is the endosome. The protein localises to the mitochondrion membrane. It is found in the cell cortex. In terms of biological role, involved in the regulation of endosome-to-lysosome trafficking, including endocytic trafficking of EGF-EGFR complexes and GABA-A receptors. Involved in mitochondrial motility. When O-glycosylated, abolishes mitochondrial motility. Crucial for recruiting OGT to the mitochondrial surface of neuronal processes. TRAK1 and RHOT form an essential protein complex that links KIF5 to mitochondria for light chain-independent, anterograde transport of mitochondria. The sequence is that of Trafficking kinesin-binding protein 1 (TRAK1) from Homo sapiens (Human).